We begin with the raw amino-acid sequence, 199 residues long: Recombination protein RecR (199 aa).

The C4-type zinc-finger motif lies at 56–71 (CTVCFNVTEQETCNIC). Positions 79–174 (SVICVVEESK…TVTRLASGLP (96 aa)) constitute a Toprim domain.

It belongs to the RecR family.

Functionally, may play a role in DNA repair. It seems to be involved in an RecBC-independent recombinational process of DNA repair. It may act with RecF and RecO. The sequence is that of Recombination protein RecR from Paenarthrobacter aurescens (strain TC1).